A 308-amino-acid polypeptide reads, in one-letter code: UDP-N-acetylenolpyruvoylglucosamine reductase (308 aa).

One can recognise an FAD-binding PCMH-type domain in the interval 32 to 196 (VGGPAARLYK…ISAKLQLSPG (165 aa)). Residue R176 is part of the active site. Catalysis depends on S225, which acts as the Proton donor. E296 is an active-site residue.

Belongs to the MurB family. It depends on FAD as a cofactor.

Its subcellular location is the cytoplasm. It carries out the reaction UDP-N-acetyl-alpha-D-muramate + NADP(+) = UDP-N-acetyl-3-O-(1-carboxyvinyl)-alpha-D-glucosamine + NADPH + H(+). Its pathway is cell wall biogenesis; peptidoglycan biosynthesis. In terms of biological role, cell wall formation. In Legionella pneumophila (strain Corby), this protein is UDP-N-acetylenolpyruvoylglucosamine reductase.